Here is a 1912-residue protein sequence, read N- to C-terminus: Vitellogenin-1 (1912 aa).

The signal sequence occupies residues Met1 to Ser15. One can recognise a Vitellogenin domain in the interval Phe24–Val663. Asn163 is a glycosylation site (N-linked (GlcNAc...) asparagine). A disordered region spans residues Asp948 to Phe972. Asn991 carries an N-linked (GlcNAc...) asparagine glycan. Disordered stretches follow at residues Lys1080–Ile1329 and His1351–Asn1432. 2 stretches are compositionally biased toward low complexity: residues Asn1092 to Ser1124 and Ser1150 to Lys1235. The N-linked (GlcNAc...) asparagine glycan is linked to Asn1206. The segment covering Glu1259–Gln1269 has biased composition (basic and acidic residues). The span at Ser1273 to Ser1299 shows a compositional bias: low complexity. Residues Trp1306–Arg1316 show a composition bias toward basic and acidic residues. Over residues Ser1319 to Asp1328 the composition is skewed to polar residues. Low complexity predominate over residues Arg1357–Ser1381. The N-linked (GlcNAc...) asparagine glycan is linked to Asn1375. A compositionally biased stretch (basic residues) spans Ser1397–Arg1409. The region spanning Ser1640–Ser1818 is the VWFD domain. 2 disulfides stabilise this stretch: Cys1642-Cys1781 and Cys1665-Cys1817. N-linked (GlcNAc...) asparagine glycosylation is found at Asn1662, Asn1698, and Asn1703.

Post-translationally, phosvitin, an egg yolk storage protein, is one of the most highly phosphorylated (10%) proteins in nature. Cathepsin D is responsible for intraoocytic processing of vitellogenin. In terms of processing, may contain intrachain disulfide bonds. As to expression, produced by the liver, secreted into the blood and then sequestered by receptor mediated endocytosis into growing oocytes, where it is generally cleaved, giving rise to the respective yolk components.

Precursor of the egg-yolk proteins that are sources of nutrients during early development of oviparous organisms. In terms of biological role, phosvitin is believed to be of importance in sequestering calcium, iron and other cations for the developing embryo. This chain is Vitellogenin-1 (VTG1), found in Gallus gallus (Chicken).